A 122-amino-acid chain; its full sequence is Photosystem II extrinsic protein U (122 aa).

The first 26 residues, 1 to 26 (MKTIVRLFAILMVLISSVGFVGSAVA), serve as a signal peptide directing secretion.

This sequence belongs to the PsbU family. In terms of assembly, PSII is composed of 1 copy each of membrane proteins PsbA, PsbB, PsbC, PsbD, PsbE, PsbF, PsbH, PsbI, PsbJ, PsbK, PsbL, PsbM, PsbT, PsbX, PsbY, PsbZ, Psb30/Ycf12, peripheral proteins PsbO, CyanoQ (PsbQ), PsbU, PsbV and a large number of cofactors. It forms dimeric complexes.

The protein localises to the cellular thylakoid membrane. In terms of biological role, one of the extrinsic, lumenal subunits of photosystem II (PSII). PSII is a light-driven water plastoquinone oxidoreductase, using light energy to abstract electrons from H(2)O, generating a proton gradient subsequently used for ATP formation. The extrinsic proteins stabilize the structure of photosystem II oxygen-evolving complex (OEC), the ion environment of oxygen evolution and protect the OEC against heat-induced inactivation. The sequence is that of Photosystem II extrinsic protein U from Crocosphaera subtropica (strain ATCC 51142 / BH68) (Cyanothece sp. (strain ATCC 51142)).